Here is a 217-residue protein sequence, read N- to C-terminus: 3-demethoxyubiquinol 3-hydroxylase (217 aa).

Fe cation-binding residues include E66, E96, H99, E148, E180, and H183.

The protein belongs to the COQ7 family. Requires Fe cation as cofactor.

The protein resides in the cell membrane. The catalysed reaction is a 5-methoxy-2-methyl-3-(all-trans-polyprenyl)benzene-1,4-diol + AH2 + O2 = a 3-demethylubiquinol + A + H2O. The protein operates within cofactor biosynthesis; ubiquinone biosynthesis. In terms of biological role, catalyzes the hydroxylation of 2-nonaprenyl-3-methyl-6-methoxy-1,4-benzoquinol during ubiquinone biosynthesis. The polypeptide is 3-demethoxyubiquinol 3-hydroxylase (Xanthomonas oryzae pv. oryzae (strain MAFF 311018)).